We begin with the raw amino-acid sequence, 281 residues long: Orotidine 5'-phosphate decarboxylase (281 aa).

Residue Lys-94 is the Proton donor of the active site.

This sequence belongs to the OMP decarboxylase family. Type 2 subfamily.

The enzyme catalyses orotidine 5'-phosphate + H(+) = UMP + CO2. It functions in the pathway pyrimidine metabolism; UMP biosynthesis via de novo pathway; UMP from orotate: step 2/2. In Thermomicrobium roseum (strain ATCC 27502 / DSM 5159 / P-2), this protein is Orotidine 5'-phosphate decarboxylase.